Reading from the N-terminus, the 550-residue chain is Metal transporter Nramp4 (550 aa).

Basic and acidic residues predominate over residues 1-13; the sequence is MEEGAKIGREHEQ. A disordered region spans residues 1 to 37; it reads MEEGAKIGREHEQQQQQHGRVNGSGRVAAVGGGSGGG. Low complexity predominate over residues 14-29; that stretch reads QQQQHGRVNGSGRVAA. A run of 12 helical transmembrane segments spans residues 72–92, 105–125, 151–171, 177–197, 207–227, 255–275, 292–312, 354–374, 388–408, 416–436, 457–477, and 492–512; these read FLAH…PSNL, SLLW…SLAA, LWLL…LGTA, LLHI…FLIL, MEFT…MELG, VAMF…SLVL, FFLL…VAIV, VYGV…SYAG, IIYL…CSIG, IINI…IPLI, IAWI…CTSF, and AIIS…LIYL.

This sequence belongs to the NRAMP (TC 2.A.55) family.

Its subcellular location is the membrane. In terms of biological role, probable metal transporter. The chain is Metal transporter Nramp4 (NRAMP4) from Oryza sativa subsp. japonica (Rice).